We begin with the raw amino-acid sequence, 166 residues long: NAD(P)H-quinone oxidoreductase subunit I, chloroplastic (166 aa).

4Fe-4S ferredoxin-type domains lie at glycine 55–lysine 84 and leucine 95–glutamate 124. Residues cysteine 64, cysteine 67, cysteine 70, cysteine 74, cysteine 104, cysteine 107, cysteine 110, and cysteine 114 each coordinate [4Fe-4S] cluster.

The protein belongs to the complex I 23 kDa subunit family. In terms of assembly, NDH is composed of at least 16 different subunits, 5 of which are encoded in the nucleus. Requires [4Fe-4S] cluster as cofactor.

The protein resides in the plastid. It localises to the chloroplast thylakoid membrane. It catalyses the reaction a plastoquinone + NADH + (n+1) H(+)(in) = a plastoquinol + NAD(+) + n H(+)(out). It carries out the reaction a plastoquinone + NADPH + (n+1) H(+)(in) = a plastoquinol + NADP(+) + n H(+)(out). Its function is as follows. NDH shuttles electrons from NAD(P)H:plastoquinone, via FMN and iron-sulfur (Fe-S) centers, to quinones in the photosynthetic chain and possibly in a chloroplast respiratory chain. The immediate electron acceptor for the enzyme in this species is believed to be plastoquinone. Couples the redox reaction to proton translocation, and thus conserves the redox energy in a proton gradient. This is NAD(P)H-quinone oxidoreductase subunit I, chloroplastic from Picradeniopsis absinthifolia (Hairyseed bahia).